Here is a 124-residue protein sequence, read N- to C-terminus: MATVNQLVRKPRARKVAKSNVPALEACPQKRGVCTRVYTTTPRKPNSALRKVCRVRLTNGFEVTSYIGGEGHNLQEHSVILIRGGRVKDLPGVRYHTVRGALDCSGVKDRKQARSKYGVKRPKA.

Position 89 is a 3-methylthioaspartic acid (Asp-89). At Lys-108 the chain carries N6-acetyllysine.

It belongs to the universal ribosomal protein uS12 family. Part of the 30S ribosomal subunit. Contacts proteins S8 and S17. May interact with IF1 in the 30S initiation complex.

With S4 and S5 plays an important role in translational accuracy. Its function is as follows. Interacts with and stabilizes bases of the 16S rRNA that are involved in tRNA selection in the A site and with the mRNA backbone. Located at the interface of the 30S and 50S subunits, it traverses the body of the 30S subunit contacting proteins on the other side and probably holding the rRNA structure together. The combined cluster of proteins S8, S12 and S17 appears to hold together the shoulder and platform of the 30S subunit. The polypeptide is Small ribosomal subunit protein uS12 (Escherichia coli (strain K12 / MC4100 / BW2952)).